The primary structure comprises 392 residues: MAMPSIRHVRAFVVRGGGADYHDQADGHWIDDHISTPMARYPEYRQSRQSFGINVLGTLVVEIEASDGTVGFAVTTGGEIGAFIVEKHLARFLEGQLVTDIEKMWDQMYFSTLYYGRKGVVLNTISGVDLALWDLLAKVRKEPVYQLLGGPVRDELQFYATGARPDLAKEMGFIGGKLPLQHSPAEGEEGLRKNIDKLAEMRGRVGGDFWLMYDCWMSLDVTYATKLAKAAHEHGLKWIEEALPPDDYWGYAELRRNVPRGMMVSTGEHEATRWGFRMLLEMGCCDLIQPDVGWCGGITELVKISALADAHNVLVVPHGSSVYSYHFVVTRHNSPFAEFLMMAPKADQVVPMFTPLLLDEPVPVNGRMRVPDTPGFGVRLNPECKLERPYQH.

His-22 and Arg-48 together coordinate substrate. Asp-214, Glu-240, and Glu-268 together coordinate Mg(2+). His-318 (proton acceptor) is an active-site residue. Glu-338 serves as a coordination point for substrate.

The protein belongs to the mandelate racemase/muconate lactonizing enzyme family. RhamD subfamily. As to quaternary structure, homooctamer; tetramer of dimers. The cofactor is Mg(2+).

The catalysed reaction is L-rhamnonate = 2-dehydro-3-deoxy-L-rhamnonate + H2O. In terms of biological role, catalyzes the dehydration of L-rhamnonate to 2-keto-3-deoxy-L-rhamnonate (KDR). The protein is L-rhamnonate dehydratase of Paraburkholderia phymatum (strain DSM 17167 / CIP 108236 / LMG 21445 / STM815) (Burkholderia phymatum).